The following is an 86-amino-acid chain: Small ribosomal subunit protein bS20 (86 aa).

This sequence belongs to the bacterial ribosomal protein bS20 family.

Binds directly to 16S ribosomal RNA. In Mycolicibacterium gilvum (strain PYR-GCK) (Mycobacterium gilvum (strain PYR-GCK)), this protein is Small ribosomal subunit protein bS20.